Here is a 311-residue protein sequence, read N- to C-terminus: Malate dehydrogenase (311 aa).

NAD(+) is bound by residues 7-13 (GAAGGIG) and Asp-34. Substrate is bound by residues Arg-81 and Arg-87. NAD(+)-binding positions include Asn-94 and 117–119 (ITN). 2 residues coordinate substrate: Asn-119 and Arg-153. Catalysis depends on His-177, which acts as the Proton acceptor. Position 227 (Met-227) interacts with NAD(+).

The protein belongs to the LDH/MDH superfamily. MDH type 1 family. As to quaternary structure, homodimer.

It catalyses the reaction (S)-malate + NAD(+) = oxaloacetate + NADH + H(+). Catalyzes the reversible oxidation of malate to oxaloacetate. In Vibrio campbellii (strain ATCC BAA-1116), this protein is Malate dehydrogenase.